We begin with the raw amino-acid sequence, 227 residues long: Cytidylate kinase (227 aa).

12 to 20 (GPSGAGKGT) provides a ligand contact to ATP.

The protein belongs to the cytidylate kinase family. Type 1 subfamily.

Its subcellular location is the cytoplasm. It catalyses the reaction CMP + ATP = CDP + ADP. The catalysed reaction is dCMP + ATP = dCDP + ADP. This chain is Cytidylate kinase, found in Xanthomonas oryzae pv. oryzae (strain PXO99A).